A 210-amino-acid polypeptide reads, in one-letter code: Large ribosomal subunit protein uL3 (210 aa).

Residues 131–155 are disordered; it reads GPMSHGSKYHRRVGSMSATTDPGRT.

Belongs to the universal ribosomal protein uL3 family. In terms of assembly, part of the 50S ribosomal subunit. Forms a cluster with proteins L14 and L19.

One of the primary rRNA binding proteins, it binds directly near the 3'-end of the 23S rRNA, where it nucleates assembly of the 50S subunit. The chain is Large ribosomal subunit protein uL3 from Thermoanaerobacter sp. (strain X514).